Consider the following 147-residue polypeptide: Ribosome maturation factor RimP (147 aa).

The protein belongs to the RimP family.

The protein localises to the cytoplasm. In terms of biological role, required for maturation of 30S ribosomal subunits. This is Ribosome maturation factor RimP from Legionella pneumophila (strain Lens).